Consider the following 237-residue polypeptide: Probable transcriptional regulatory protein EAT1b_0153 (237 aa).

The protein belongs to the TACO1 family. YeeN subfamily.

It localises to the cytoplasm. The protein is Probable transcriptional regulatory protein EAT1b_0153 of Exiguobacterium sp. (strain ATCC BAA-1283 / AT1b).